Reading from the N-terminus, the 158-residue chain is Xanthine-guanine phosphoribosyltransferase (158 aa).

Residues 38–39 and 90–98 each bind 5-phospho-alpha-D-ribose 1-diphosphate; these read RG and DDLVDTGGT. D91 contacts Mg(2+). The guanine site is built by D94 and I137. 2 residues coordinate xanthine: D94 and I137. GMP-binding positions include 94 to 98 and 136 to 137; these read DTGGT and WI.

This sequence belongs to the purine/pyrimidine phosphoribosyltransferase family. XGPT subfamily. As to quaternary structure, homotetramer. The cofactor is Mg(2+).

The protein resides in the cell inner membrane. The catalysed reaction is GMP + diphosphate = guanine + 5-phospho-alpha-D-ribose 1-diphosphate. It catalyses the reaction XMP + diphosphate = xanthine + 5-phospho-alpha-D-ribose 1-diphosphate. It carries out the reaction IMP + diphosphate = hypoxanthine + 5-phospho-alpha-D-ribose 1-diphosphate. It participates in purine metabolism; GMP biosynthesis via salvage pathway; GMP from guanine: step 1/1. The protein operates within purine metabolism; XMP biosynthesis via salvage pathway; XMP from xanthine: step 1/1. In terms of biological role, purine salvage pathway enzyme that catalyzes the transfer of the ribosyl-5-phosphate group from 5-phospho-alpha-D-ribose 1-diphosphate (PRPP) to the N9 position of the 6-oxopurines guanine and xanthine to form the corresponding ribonucleotides GMP (guanosine 5'-monophosphate) and XMP (xanthosine 5'-monophosphate), with the release of PPi. To a lesser extent, also acts on hypoxanthine. The polypeptide is Xanthine-guanine phosphoribosyltransferase (Buchnera aphidicola subsp. Acyrthosiphon pisum (strain APS) (Acyrthosiphon pisum symbiotic bacterium)).